The following is a 440-amino-acid chain: Phosphatidylcholine-sterol acyltransferase (440 aa).

An N-terminal signal peptide occupies residues 1–24 (MGPPGSPWQWVLLLLGLLLPPAAP). N44 carries N-linked (GlcNAc...) asparagine glycosylation. C74 and C98 are joined by a disulfide. N-linked (GlcNAc...) asparagine glycosylation occurs at N108. Residue S205 is the Nucleophile of the active site. N296 carries an N-linked (GlcNAc...) asparagine glycan. An intrachain disulfide couples C337 to C380. Catalysis depends on charge relay system residues D369 and H401. N408 carries an N-linked (GlcNAc...) asparagine glycan.

The protein belongs to the AB hydrolase superfamily. Lipase family. In terms of tissue distribution, detected in blood plasma (at protein level). Highly expressed in liver.

The protein localises to the secreted. It catalyses the reaction a sterol + a 1,2-diacyl-sn-glycero-3-phosphocholine = a sterol ester + a 1-acyl-sn-glycero-3-phosphocholine. The enzyme catalyses a 1-O-alkyl-2-acetyl-sn-glycero-3-phosphocholine + H2O = a 1-O-alkyl-sn-glycero-3-phosphocholine + acetate + H(+). It carries out the reaction a 1-hexadecanoyl-2-acyl-sn-glycero-3-phosphocholine + (24S)-hydroxycholesterol = (24S)-24-hydroxycholesterol ester + 1-hexadecanoyl-sn-glycero-3-phosphocholine. The catalysed reaction is (24S)-hydroxycholesterol + 1-hexadecanoyl-2-(9Z,12Z-octadecadienoyl)-sn-glycero-3-phosphocholine = (24S)-hydroxycholesterol 3-linoleoate + 1-hexadecanoyl-sn-glycero-3-phosphocholine. It catalyses the reaction 1-hexadecanoyl-2-(5Z,8Z,11Z,14Z-eicosatetraenoyl)-sn-glycero-3-phosphocholine + cholesterol = cholesteryl (5Z,8Z,11Z,14Z)-eicosatetraenoate + 1-hexadecanoyl-sn-glycero-3-phosphocholine. The enzyme catalyses 1-hexadecanoyl-2-(9Z-octadecenoyl)-sn-glycero-3-phosphocholine + cholesterol = cholesteryl (9Z-octadecenoate) + 1-hexadecanoyl-sn-glycero-3-phosphocholine. It carries out the reaction 1-hexadecanoyl-2-(8Z,11Z,14Z-eicosatrienoyl)-sn-glycero-3-phosphocholine + cholesterol = cholesteryl (8Z,11Z,14Z)-eicosatrienoate + 1-hexadecanoyl-sn-glycero-3-phosphocholine. The catalysed reaction is 1-hexadecanoyl-2-(5Z,8Z,11Z-eicosatrienoyl)-sn-glycero-3-phosphocholine + cholesterol = cholesteryl (5Z,8Z,11Z)-eicosatrienoate + 1-hexadecanoyl-sn-glycero-3-phosphocholine. It catalyses the reaction 1-hexadecanoyl-2-(5Z,8Z,11Z,14Z,17Z-eicosapentaenoyl)-sn-glycero-3-phosphocholine + cholesterol = (5Z,8Z,11Z,14Z,17Z-eicosapentaenoyl)-cholesterol + 1-hexadecanoyl-sn-glycero-3-phosphocholine. The enzyme catalyses 1-hexadecanoyl-2-(9Z,12Z-octadecadienoyl)-sn-glycero-3-phosphocholine + cholesterol = cholesteryl (9Z,12Z)-octadecadienoate + 1-hexadecanoyl-sn-glycero-3-phosphocholine. It carries out the reaction 1-hexadecanoyl-2-(6Z,9Z,12Z-octadecatrienoyl)-sn-glycero-3-phosphocholine + cholesterol = (6Z,9Z,12Z-octadecatrienoyl)-cholesterol + 1-hexadecanoyl-sn-glycero-3-phosphocholine. The catalysed reaction is 1-hexadecanoyl-2-(11Z,14Z,17Z-eicosatrienoyl)-sn-glycero-3-phosphocholine + cholesterol = (11Z,14Z,17Z-eicosatrienoyl)-cholesterol + 1-hexadecanoyl-sn-glycero-3-phosphocholine. It catalyses the reaction 1-hexadecanoyl-2-(9Z,12Z,15Z-octadecatrienoyl)-sn-glycero-3-phosphocholine + cholesterol = (9Z,12Z,15Z-octadecatrienoyl)-cholesterol + 1-hexadecanoyl-sn-glycero-3-phosphocholine. The enzyme catalyses 1-hexadecanoyl-2-(9Z,12Z-octadecadienoyl)-sn-glycero-3-phosphocholine + H2O = (9Z,12Z)-octadecadienoate + 1-hexadecanoyl-sn-glycero-3-phosphocholine + H(+). It carries out the reaction 1-hexadecanoyl-2-(5Z,8Z,11Z,14Z-eicosatetraenoyl)-sn-glycero-3-phosphocholine + H2O = 1-hexadecanoyl-sn-glycero-3-phosphocholine + (5Z,8Z,11Z,14Z)-eicosatetraenoate + H(+). The catalysed reaction is a 1-O-alkyl-2-acetyl-sn-glycero-3-phosphocholine + 1-hexadecanoyl-sn-glycero-3-phosphocholine = 1-hexadecanoyl-2-acetyl-sn-glycero-3-phosphocholine + a 1-O-alkyl-sn-glycero-3-phosphocholine. Central enzyme in the extracellular metabolism of plasma lipoproteins. Synthesized mainly in the liver and secreted into plasma where it converts cholesterol and phosphatidylcholines (lecithins) to cholesteryl esters and lysophosphatidylcholines on the surface of high and low density lipoproteins (HDLs and LDLs). The cholesterol ester is then transported back to the liver. Also produced in the brain by primary astrocytes, and esterifies free cholesterol on nascent APOE-containing lipoproteins secreted from glia and influences cerebral spinal fluid (CSF) APOE- and APOA1 levels. Together with APOE and the cholesterol transporter ABCA1, plays a key role in the maturation of glial-derived, nascent lipoproteins. Required for remodeling high-density lipoprotein particles into their spherical forms. Has a preference for plasma 16:0-18:2 or 18:O-18:2 phosphatidylcholines. Catalyzes the hydrolysis of 1-O-alkyl-2-acetyl-sn-glycero-3-phosphocholine (platelet-activating factor or PAF) to 1-O-alkyl-sn-glycero-3-phosphocholine (lyso-PAF). Also catalyzes the transfer of the acetate group from PAF to 1-hexadecanoyl-sn-glycero-3-phosphocholine forming lyso-PAF. Catalyzes the esterification of (24S)-hydroxycholesterol (24(S)OH-C), also known as cerebrosterol to produce 24(S)OH-C monoesters. The polypeptide is Phosphatidylcholine-sterol acyltransferase (LCAT) (Oryctolagus cuniculus (Rabbit)).